We begin with the raw amino-acid sequence, 499 residues long: Probable cytosol aminopeptidase (499 aa).

Residues Lys262 and Asp267 each coordinate Mn(2+). Lys274 is a catalytic residue. Mn(2+) is bound by residues Asp285, Asp344, and Glu346. Arg348 is a catalytic residue.

This sequence belongs to the peptidase M17 family. Requires Mn(2+) as cofactor.

The protein resides in the cytoplasm. It carries out the reaction Release of an N-terminal amino acid, Xaa-|-Yaa-, in which Xaa is preferably Leu, but may be other amino acids including Pro although not Arg or Lys, and Yaa may be Pro. Amino acid amides and methyl esters are also readily hydrolyzed, but rates on arylamides are exceedingly low.. It catalyses the reaction Release of an N-terminal amino acid, preferentially leucine, but not glutamic or aspartic acids.. Functionally, presumably involved in the processing and regular turnover of intracellular proteins. Catalyzes the removal of unsubstituted N-terminal amino acids from various peptides. This is Probable cytosol aminopeptidase from Protochlamydia amoebophila (strain UWE25).